We begin with the raw amino-acid sequence, 403 residues long: Probable tRNA sulfurtransferase (403 aa).

The region spanning 60 to 165 (QLAEERLKPI…KEGVFLSCRT (106 aa)) is the THUMP domain. Residues 183-184 (ML), 208-209 (HF), arginine 265, glycine 287, and glutamine 296 contribute to the ATP site.

This sequence belongs to the ThiI family.

It localises to the cytoplasm. The catalysed reaction is [ThiI sulfur-carrier protein]-S-sulfanyl-L-cysteine + a uridine in tRNA + 2 reduced [2Fe-2S]-[ferredoxin] + ATP + H(+) = [ThiI sulfur-carrier protein]-L-cysteine + a 4-thiouridine in tRNA + 2 oxidized [2Fe-2S]-[ferredoxin] + AMP + diphosphate. It catalyses the reaction [ThiS sulfur-carrier protein]-C-terminal Gly-Gly-AMP + S-sulfanyl-L-cysteinyl-[cysteine desulfurase] + AH2 = [ThiS sulfur-carrier protein]-C-terminal-Gly-aminoethanethioate + L-cysteinyl-[cysteine desulfurase] + A + AMP + 2 H(+). It participates in cofactor biosynthesis; thiamine diphosphate biosynthesis. Its function is as follows. Catalyzes the ATP-dependent transfer of a sulfur to tRNA to produce 4-thiouridine in position 8 of tRNAs, which functions as a near-UV photosensor. Also catalyzes the transfer of sulfur to the sulfur carrier protein ThiS, forming ThiS-thiocarboxylate. This is a step in the synthesis of thiazole, in the thiamine biosynthesis pathway. The sulfur is donated as persulfide by IscS. The polypeptide is Probable tRNA sulfurtransferase (Listeria monocytogenes serotype 4a (strain HCC23)).